A 334-amino-acid polypeptide reads, in one-letter code: Phospholipase A1 2 (334 aa).

The first 23 residues, 1–23 (MMNLKYLLFFCLVQALHYCYAYG), serve as a signal peptide directing secretion. A propeptide spanning residues 24–33 (DPSLSNELDR) is cleaved from the precursor. A disulfide bridge connects residues Cys-37 and Cys-120. Residue Ser-170 is the Nucleophile of the active site. Asp-198 serves as the catalytic Charge relay system. Cystine bridges form between Cys-209–Cys-214 and Cys-252–Cys-261. His-263 (charge relay system) is an active-site residue. Cystine bridges form between Cys-278–Cys-302, Cys-279–Cys-327, and Cys-295–Cys-300.

Belongs to the AB hydrolase superfamily. Lipase family. Not glycosylated. Expressed by the venom gland.

The protein resides in the secreted. The catalysed reaction is a 1,2-diacyl-sn-glycero-3-phosphocholine + H2O = a 2-acyl-sn-glycero-3-phosphocholine + a fatty acid + H(+). In terms of biological role, catalyzes the hydrolysis of phosphatidylcholine with phospholipase A1 activity (6.3 U/ml). May act as an allergen and induce hemolytic activity. The sequence is that of Phospholipase A1 2 from Vespa affinis (Lesser banded hornet).